The chain runs to 97 residues: Protein RALF-like 2 (97 aa).

A signal peptide spans 1–25; it reads MEARHMLVTILLLSFVFMNIMKVEA. Intrachain disulfides connect Cys-42-Cys-49 and Cys-61-Cys-67.

It belongs to the plant rapid alkalinization factor (RALF) family.

Its subcellular location is the secreted. Cell signaling peptide that may regulate plant stress, growth, and development. Mediates a rapid alkalinization of extracellular space by mediating a transient increase in the cytoplasmic Ca(2+) concentration leading to a calcium-dependent signaling events through a cell surface receptor and a concomitant activation of some intracellular mitogen-activated protein kinases. The protein is Protein RALF-like 2 (RALFL2) of Arabidopsis thaliana (Mouse-ear cress).